A 167-amino-acid chain; its full sequence is ATP synthase subunit b (167 aa).

The chain crosses the membrane as a helical span at residues 8-28 (AEAEFWVGAGLLIFLGIVFFG).

Belongs to the ATPase B chain family. In terms of assembly, F-type ATPases have 2 components, F(1) - the catalytic core - and F(0) - the membrane proton channel. F(1) has five subunits: alpha(3), beta(3), gamma(1), delta(1), epsilon(1). F(0) has three main subunits: a(1), b(2) and c(10-14). The alpha and beta chains form an alternating ring which encloses part of the gamma chain. F(1) is attached to F(0) by a central stalk formed by the gamma and epsilon chains, while a peripheral stalk is formed by the delta and b chains.

The protein localises to the cell inner membrane. F(1)F(0) ATP synthase produces ATP from ADP in the presence of a proton or sodium gradient. F-type ATPases consist of two structural domains, F(1) containing the extramembraneous catalytic core and F(0) containing the membrane proton channel, linked together by a central stalk and a peripheral stalk. During catalysis, ATP synthesis in the catalytic domain of F(1) is coupled via a rotary mechanism of the central stalk subunits to proton translocation. In terms of biological role, component of the F(0) channel, it forms part of the peripheral stalk, linking F(1) to F(0). In Phenylobacterium zucineum (strain HLK1), this protein is ATP synthase subunit b.